The chain runs to 359 residues: MRAYNFCAGPAALPTAVLEKAQQELLDWQGKGLSIMEMSHRSADYVAVAEKAEADLRKLMNIPENYKVLFLQGGASLQFSAIPLNLLGKNNKADYIHTGIWSEKALKEAKRYGDINVVEAGIKVDGKFAISEQSEWNLSDDAAYVHYADNETIGGLQFAGVPDVKAPLVCDFSSSILSAPLDVSKFGLIYAGAQKNIGPAGLTIVIIRDDLLDQAKAEIPSILKYADQAKNGSMVNTPSTYAWYLSGLVFEWLLEQGGVDAIHKVNLEKAQLLYGYIDSSDFYNNPIAIPNRSIMNVPFTLADEALEKQFLKEAEANHLLNLAGHRSVGGMRASIYNAVPLEGVQALIRFMDDFAKRNG.

Residue Arg-41 participates in L-glutamate binding. Residues 75–76 (AS), Trp-101, Thr-152, Asp-171, and Gln-194 each bind pyridoxal 5'-phosphate. The residue at position 195 (Lys-195) is an N6-(pyridoxal phosphate)lysine. 236 to 237 (NT) lines the pyridoxal 5'-phosphate pocket.

This sequence belongs to the class-V pyridoxal-phosphate-dependent aminotransferase family. SerC subfamily. In terms of assembly, homodimer. It depends on pyridoxal 5'-phosphate as a cofactor.

Its subcellular location is the cytoplasm. The catalysed reaction is O-phospho-L-serine + 2-oxoglutarate = 3-phosphooxypyruvate + L-glutamate. The enzyme catalyses 4-(phosphooxy)-L-threonine + 2-oxoglutarate = (R)-3-hydroxy-2-oxo-4-phosphooxybutanoate + L-glutamate. It functions in the pathway amino-acid biosynthesis; L-serine biosynthesis; L-serine from 3-phospho-D-glycerate: step 2/3. The protein operates within cofactor biosynthesis; pyridoxine 5'-phosphate biosynthesis; pyridoxine 5'-phosphate from D-erythrose 4-phosphate: step 3/5. Functionally, catalyzes the reversible conversion of 3-phosphohydroxypyruvate to phosphoserine and of 3-hydroxy-2-oxo-4-phosphonooxybutanoate to phosphohydroxythreonine. In Acinetobacter baumannii (strain AB307-0294), this protein is Phosphoserine aminotransferase.